Consider the following 85-residue polypeptide: Putative membrane protein insertion efficiency factor (85 aa).

This sequence belongs to the UPF0161 family.

It is found in the cell membrane. Functionally, could be involved in insertion of integral membrane proteins into the membrane. Its function is as follows. Lyses fish blood cells. The protein is Putative membrane protein insertion efficiency factor (hlyA) of Aeromonas hydrophila.